The primary structure comprises 200 residues: MSNSAQRDARNSRDESARASDTDRIQIAQLLAYAAEQGRLQLTDYEDRLARAYAATTYQELDRLRADLPGAAIGPRRGGECNPAPSTLLLALLGGFERRGRWNVPKKLTTFTLWGSGVLDLRYADFTSTEVDIRAYSIMGAQTILLPPEVNVEIHGHRVMGGFDRKVVGEGTRGAPTVRIRGFSLWGDVGIKRKPRKPRK.

Residues 1 to 21 (MSNSAQRDARNSRDESARASD) form a disordered region. The segment covering 7–21 (RDARNSRDESARASD) has biased composition (basic and acidic residues).

This is an uncharacterized protein from Mycobacterium tuberculosis (strain CDC 1551 / Oshkosh).